The sequence spans 479 residues: Bifunctional AAC/APH (479 aa).

The 173-residue stretch at 8–180 (ICIRTLIDDD…DCYLMEYRYD (173 aa)) folds into the N-acetyltransferase domain. The acetyl-CoA binding site stretch occupies residues 110 to 153 (KGIGTRYIKLIFEFLKKERNANAVILDPHKNNPRAIRAYQKSGF). D374 acts as the Proton acceptor; for phosphotransferase activity in catalysis. D393 contributes to the a gentamycin binding site.

This sequence in the C-terminal section; belongs to the aminoglycoside phosphotransferase family.

The protein resides in the cytoplasm. The catalysed reaction is a gentamycin + GTP = a gentamycin 2''-phosphate + GDP + H(+). Involved in resistance to gentamicin, tobramycin, and kanamycin. Tobramycin and kanamycin resistance is due to the ACC activity, specified by N-terminal region. The C-terminal region is a kinase that phosphorylates several 4,6-disubstituted aminoglycosides. This Enterococcus faecalis (strain ATCC 700802 / V583) protein is Bifunctional AAC/APH (aacA-aphD).